An 80-amino-acid polypeptide reads, in one-letter code: Cell division protein ZapB (80 aa).

A coiled-coil region spans residues 3-80; the sequence is FEVLEQLESK…ALLGKMDEVE (78 aa).

This sequence belongs to the ZapB family. In terms of assembly, homodimer. The ends of the coiled-coil dimer bind to each other, forming polymers. Interacts with FtsZ.

It is found in the cytoplasm. In terms of biological role, non-essential, abundant cell division factor that is required for proper Z-ring formation. It is recruited early to the divisome by direct interaction with FtsZ, stimulating Z-ring assembly and thereby promoting cell division earlier in the cell cycle. Its recruitment to the Z-ring requires functional FtsA or ZipA. This Vibrio parahaemolyticus serotype O3:K6 (strain RIMD 2210633) protein is Cell division protein ZapB.